A 227-amino-acid chain; its full sequence is MAYPVQLGFQDAASPIMEELLYFHDHTLMIMFLISSLVLYIISLMLTTELMHTNTMDAQEVETVWTILPAAILILIALPSLRILYMMDEITTPSLTLKTMGHQWYWSYEYTDYENLCFDSYMVPSSDLKPGELRLLEVDNRIVLPTELSIRMLISSEDVLHSWAVPSLGVKTDAIPGRLNQATLMASRPGIYYGQCSEICGANHSFMPIVLELVPLKHFEEWLLSML.

Over 1–14 (MAYPVQLGFQDAAS) the chain is Mitochondrial intermembrane. The helical transmembrane segment at 15-45 (PIMEELLYFHDHTLMIMFLISSLVLYIISLM) threads the bilayer. Residues 46-59 (LTTELMHTNTMDAQ) are Mitochondrial matrix-facing. A helical transmembrane segment spans residues 60–87 (EVETVWTILPAAILILIALPSLRILYMM). Residues 88–227 (DEITTPSLTL…HFEEWLLSML (140 aa)) lie on the Mitochondrial intermembrane side of the membrane. H161, C196, E198, C200, H204, and M207 together coordinate Cu cation. Residue E198 participates in Mg(2+) binding.

Belongs to the cytochrome c oxidase subunit 2 family. In terms of assembly, component of the cytochrome c oxidase (complex IV, CIV), a multisubunit enzyme composed of 14 subunits. The complex is composed of a catalytic core of 3 subunits MT-CO1, MT-CO2 and MT-CO3, encoded in the mitochondrial DNA, and 11 supernumerary subunits COX4I, COX5A, COX5B, COX6A, COX6B, COX6C, COX7A, COX7B, COX7C, COX8 and NDUFA4, which are encoded in the nuclear genome. The complex exists as a monomer or a dimer and forms supercomplexes (SCs) in the inner mitochondrial membrane with NADH-ubiquinone oxidoreductase (complex I, CI) and ubiquinol-cytochrome c oxidoreductase (cytochrome b-c1 complex, complex III, CIII), resulting in different assemblies (supercomplex SCI(1)III(2)IV(1) and megacomplex MCI(2)III(2)IV(2)). Found in a complex with TMEM177, COA6, COX18, COX20, SCO1 and SCO2. Interacts with TMEM177 in a COX20-dependent manner. Interacts with COX20. Interacts with COX16. It depends on Cu cation as a cofactor.

Its subcellular location is the mitochondrion inner membrane. It catalyses the reaction 4 Fe(II)-[cytochrome c] + O2 + 8 H(+)(in) = 4 Fe(III)-[cytochrome c] + 2 H2O + 4 H(+)(out). Functionally, component of the cytochrome c oxidase, the last enzyme in the mitochondrial electron transport chain which drives oxidative phosphorylation. The respiratory chain contains 3 multisubunit complexes succinate dehydrogenase (complex II, CII), ubiquinol-cytochrome c oxidoreductase (cytochrome b-c1 complex, complex III, CIII) and cytochrome c oxidase (complex IV, CIV), that cooperate to transfer electrons derived from NADH and succinate to molecular oxygen, creating an electrochemical gradient over the inner membrane that drives transmembrane transport and the ATP synthase. Cytochrome c oxidase is the component of the respiratory chain that catalyzes the reduction of oxygen to water. Electrons originating from reduced cytochrome c in the intermembrane space (IMS) are transferred via the dinuclear copper A center (CU(A)) of subunit 2 and heme A of subunit 1 to the active site in subunit 1, a binuclear center (BNC) formed by heme A3 and copper B (CU(B)). The BNC reduces molecular oxygen to 2 water molecules using 4 electrons from cytochrome c in the IMS and 4 protons from the mitochondrial matrix. The protein is Cytochrome c oxidase subunit 2 (MT-CO2) of Hapalemur griseus (Gray gentle lemur).